A 151-amino-acid polypeptide reads, in one-letter code: U1 small nuclear ribonucleoprotein C (151 aa).

The Matrin-type zinc finger occupies 4–36; that stretch reads FYCEYCSIYLTHSSPAGRKQHSQGRKHISAKVE.

Belongs to the U1 small nuclear ribonucleoprotein C family. As to quaternary structure, U1 snRNP is composed of the 7 core Sm proteins B/B', D1, D2, D3, E, F and G that assemble in a heptameric protein ring on the Sm site of the small nuclear RNA to form the core snRNP, and at least 3 U1 snRNP-specific proteins U1-70K, U1-A and U1-C. U1-C interacts with U1 snRNA and the 5' splice-site region of the pre-mRNA.

Its subcellular location is the nucleus. Functionally, component of the spliceosomal U1 snRNP, which is essential for recognition of the pre-mRNA 5' splice-site and the subsequent assembly of the spliceosome. U1-C is directly involved in initial 5' splice-site recognition for both constitutive and regulated alternative splicing. The interaction with the 5' splice-site seems to precede base-pairing between the pre-mRNA and the U1 snRNA. Stimulates commitment or early (E) complex formation by stabilizing the base pairing of the 5' end of the U1 snRNA and the 5' splice-site region. In Theileria annulata, this protein is U1 small nuclear ribonucleoprotein C.